Consider the following 552-residue polypeptide: Acyl-CoA-dependent acyltransferase MAC1 (552 aa).

Belongs to the trichothecene O-acetyltransferase family.

The protein operates within secondary metabolite biosynthesis. Functionally, acyl-CoA-dependent acyltransferase; part of the gene cluster that mediates the biosynthesis of mannosylerythritol lipids (MELs), surface-active substances that enhance the availability of water-insoluble substrates. Depending on the number of acetyl groups, mannosylerythritol lipids can be differentiated into MEL A (fully acetylated), MEL B and MEL C (monoacetylated at R-6 and R-4, respectively), and the fully deacetylated MEL D. The first step in the pathway is the generation of mannosylerythritol by the glycosyltransferase EMT1 which catalyzes the transfer of GDP-mannose to the C-4 atom of meso-erythritol. This reaction has to be stereospecific, since only mannosyl-D-erythritol is generated. The produced disaccharide is subsequently acylated with fatty acids of various lengths by the acyltransferases MAC1 and MAC2 at positions C-2 and C-3, repectively. The existence of MEL derivatives which carry an acetyl group at C-2 implies that at least MAC1 also accepts acetyl-CoA as a donor. The final step of MEL biosynthesis is the acetylation of the fully acylated mannosylerythritol lipids catalyzed by the acetyl-CoA-dependent acetyltransferase MAT1. MAT1 displays a relaxed regioselectivity and is able to transfer acetylgroups to both positions C-4 and C-6 of the mannosyl moiety. The polypeptide is Acyl-CoA-dependent acyltransferase MAC1 (Pseudozyma antarctica (strain T-34) (Yeast)).